The following is a 254-amino-acid chain: Cytochrome c oxidase subunit 2 (254 aa).

Over 12 to 38 (DAPEPWQICYQDSATKIMSGIDKLTGE) the chain is Mitochondrial intermembrane. A helical transmembrane segment spans residues 39-59 (IFYYETLLLIIVGWVLISAII). At 60 to 73 (KYTKTELSYKYFNH) the chain is on the mitochondrial matrix side. The helical transmembrane segment at 74–94 (GTLIEILWTCSPAFILIAISF) threads the bilayer. The Mitochondrial intermembrane portion of the chain corresponds to 95-248 (PSFKLLYLMD…KYLEWLNIHL (154 aa)). 6 residues coordinate Cu cation: His182, Cys217, Glu219, Cys221, His225, and Met228. Glu219 provides a ligand contact to Mg(2+).

Belongs to the cytochrome c oxidase subunit 2 family. In terms of assembly, component of the cytochrome c oxidase (complex IV, CIV), a multisubunit enzyme composed of a catalytic core of 3 subunits and several supernumerary subunits. The complex exists as a monomer or a dimer and forms supercomplexes (SCs) in the inner mitochondrial membrane with ubiquinol-cytochrome c oxidoreductase (cytochrome b-c1 complex, complex III, CIII). Cu cation serves as cofactor.

The protein localises to the mitochondrion inner membrane. It catalyses the reaction 4 Fe(II)-[cytochrome c] + O2 + 8 H(+)(in) = 4 Fe(III)-[cytochrome c] + 2 H2O + 4 H(+)(out). Component of the cytochrome c oxidase, the last enzyme in the mitochondrial electron transport chain which drives oxidative phosphorylation. The respiratory chain contains 3 multisubunit complexes succinate dehydrogenase (complex II, CII), ubiquinol-cytochrome c oxidoreductase (cytochrome b-c1 complex, complex III, CIII) and cytochrome c oxidase (complex IV, CIV), that cooperate to transfer electrons derived from NADH and succinate to molecular oxygen, creating an electrochemical gradient over the inner membrane that drives transmembrane transport and the ATP synthase. Cytochrome c oxidase is the component of the respiratory chain that catalyzes the reduction of oxygen to water. Electrons originating from reduced cytochrome c in the intermembrane space (IMS) are transferred via the dinuclear copper A center (CU(A)) of subunit 2 and heme A of subunit 1 to the active site in subunit 1, a binuclear center (BNC) formed by heme A3 and copper B (CU(B)). The BNC reduces molecular oxygen to 2 water molecules using 4 electrons from cytochrome c in the IMS and 4 protons from the mitochondrial matrix. In Zancudomyces culisetae (Gut fungus), this protein is Cytochrome c oxidase subunit 2.